Here is a 100-residue protein sequence, read N- to C-terminus: Urease subunit gamma (100 aa).

The protein belongs to the urease gamma subunit family. As to quaternary structure, heterotrimer of UreA (gamma), UreB (beta) and UreC (alpha) subunits. Three heterotrimers associate to form the active enzyme.

The protein localises to the cytoplasm. The enzyme catalyses urea + 2 H2O + H(+) = hydrogencarbonate + 2 NH4(+). It functions in the pathway nitrogen metabolism; urea degradation; CO(2) and NH(3) from urea (urease route): step 1/1. The chain is Urease subunit gamma from Saccharophagus degradans (strain 2-40 / ATCC 43961 / DSM 17024).